A 717-amino-acid chain; its full sequence is SAGA factor-like TAF6 (717 aa).

The sufficient for interaction with Taf9 stretch occupies residues 123–204 (KSYAGFDPRS…VPPMLGAMDS (82 aa)).

This sequence belongs to the TAF6 family. Component of the Spt-Ada-Gcn5 acetyltransferase (SAGA) complex consisting of wda/Taf5L, Saf6, Taf9, Taf10b, Taf12, Ada1, Spt3, Spt7, Spt20, Sf3b3, Sf3b5, Nipped-A/Tra1, a histone acetyltransferase (HAT) module made up of Gcn5, Ada2b (Isoform B), Ada3 and Sgf29, and a deubiquitinase (DUB) module made up of not/nonstop, Sgf11 and e(y)2 tethered to SAGA by Atxn7; not essential for SAGA complex assembly, histone-modifying activity or chromosomal recruitment. Interacts (via N-terminal histone-fold domain) with Taf9 (via N-terminal histone-fold domain); the interaction is probably direct. Probably forms a histone-like heterooctamer structure with Taf9, Taf12 and Taf10b.

Its subcellular location is the nucleus. It localises to the chromosome. Its function is as follows. Component of the transcription regulatory complex SAGA, a multiprotein complex that activates transcription by remodeling chromatin and mediating histone acetylation and deubiquitination. The SAGA complex predominantly acetylates histone H3. Involved in SAGA complex coactivator function but not essential for SAGA complex assembly, histone-modifying activity or chromosomal recruitment. Required for oogenesis; involved in transcriptional activation. The sequence is that of SAGA factor-like TAF6 from Drosophila melanogaster (Fruit fly).